The chain runs to 457 residues: Bifunctional protein GlmU (457 aa).

Residues 1–230 are pyrophosphorylase; sequence MPLSLPLHIV…AREVEGVNDL (230 aa). Residues 12 to 15, Lys-26, Gln-78, 83 to 84, 105 to 107, Gly-140, Glu-155, Asn-170, and Asn-228 contribute to the UDP-N-acetyl-alpha-D-glucosamine site; these read LAAG, GT, and YGD. A Mg(2+)-binding site is contributed by Asp-107. Position 228 (Asn-228) interacts with Mg(2+). The segment at 231 to 251 is linker; the sequence is WQLTQLERAWQIRAARALCLQ. Residues 252–457 form an N-acetyltransferase region; the sequence is GARVADPARL…DSWQRPKKKT (206 aa). Residues Arg-334 and Lys-352 each contribute to the UDP-N-acetyl-alpha-D-glucosamine site. The active-site Proton acceptor is the His-364. UDP-N-acetyl-alpha-D-glucosamine contacts are provided by Tyr-367 and Asn-378. Residues Ala-381, 387-388, Ser-406, Ala-424, and Arg-441 contribute to the acetyl-CoA site; that span reads NY.

It in the N-terminal section; belongs to the N-acetylglucosamine-1-phosphate uridyltransferase family. In the C-terminal section; belongs to the transferase hexapeptide repeat family. Homotrimer. It depends on Mg(2+) as a cofactor.

Its subcellular location is the cytoplasm. The catalysed reaction is alpha-D-glucosamine 1-phosphate + acetyl-CoA = N-acetyl-alpha-D-glucosamine 1-phosphate + CoA + H(+). It catalyses the reaction N-acetyl-alpha-D-glucosamine 1-phosphate + UTP + H(+) = UDP-N-acetyl-alpha-D-glucosamine + diphosphate. The protein operates within nucleotide-sugar biosynthesis; UDP-N-acetyl-alpha-D-glucosamine biosynthesis; N-acetyl-alpha-D-glucosamine 1-phosphate from alpha-D-glucosamine 6-phosphate (route II): step 2/2. It participates in nucleotide-sugar biosynthesis; UDP-N-acetyl-alpha-D-glucosamine biosynthesis; UDP-N-acetyl-alpha-D-glucosamine from N-acetyl-alpha-D-glucosamine 1-phosphate: step 1/1. Its pathway is bacterial outer membrane biogenesis; LPS lipid A biosynthesis. Its function is as follows. Catalyzes the last two sequential reactions in the de novo biosynthetic pathway for UDP-N-acetylglucosamine (UDP-GlcNAc). The C-terminal domain catalyzes the transfer of acetyl group from acetyl coenzyme A to glucosamine-1-phosphate (GlcN-1-P) to produce N-acetylglucosamine-1-phosphate (GlcNAc-1-P), which is converted into UDP-GlcNAc by the transfer of uridine 5-monophosphate (from uridine 5-triphosphate), a reaction catalyzed by the N-terminal domain. The sequence is that of Bifunctional protein GlmU from Xylella fastidiosa (strain 9a5c).